The chain runs to 911 residues: Valine--tRNA ligase (911 aa).

Residues 57–67 (PTVSGSLHVGH) carry the 'HIGH' region motif. A 'KMSKS' region motif is present at residues 599-603 (KMSKS). Lys602 is an ATP binding site. The tract at residues 882 to 911 (EESAAEDAPETEVAVEASELGEPPVKKPKH) is disordered.

This sequence belongs to the class-I aminoacyl-tRNA synthetase family. ValS type 2 subfamily. As to quaternary structure, monomer.

The protein resides in the cytoplasm. The catalysed reaction is tRNA(Val) + L-valine + ATP = L-valyl-tRNA(Val) + AMP + diphosphate. Its function is as follows. Catalyzes the attachment of valine to tRNA(Val). As ValRS can inadvertently accommodate and process structurally similar amino acids such as threonine, to avoid such errors, it has a 'posttransfer' editing activity that hydrolyzes mischarged Thr-tRNA(Val) in a tRNA-dependent manner. This chain is Valine--tRNA ligase, found in Bifidobacterium longum subsp. infantis (strain ATCC 15697 / DSM 20088 / JCM 1222 / NCTC 11817 / S12).